The sequence spans 121 residues: Aspartate 1-decarboxylase (121 aa).

Ser25 acts as the Schiff-base intermediate with substrate; via pyruvic acid in catalysis. Ser25 is modified (pyruvic acid (Ser)). Thr57 contacts substrate. Residue Tyr58 is the Proton donor of the active site. 73–75 is a substrate binding site; sequence GAA.

It belongs to the PanD family. As to quaternary structure, heterooctamer of four alpha and four beta subunits. It depends on pyruvate as a cofactor. In terms of processing, is synthesized initially as an inactive proenzyme, which is activated by self-cleavage at a specific serine bond to produce a beta-subunit with a hydroxyl group at its C-terminus and an alpha-subunit with a pyruvoyl group at its N-terminus.

The protein localises to the cytoplasm. It catalyses the reaction L-aspartate + H(+) = beta-alanine + CO2. It functions in the pathway cofactor biosynthesis; (R)-pantothenate biosynthesis; beta-alanine from L-aspartate: step 1/1. In terms of biological role, catalyzes the pyruvoyl-dependent decarboxylation of aspartate to produce beta-alanine. The polypeptide is Aspartate 1-decarboxylase (Wolinella succinogenes (strain ATCC 29543 / DSM 1740 / CCUG 13145 / JCM 31913 / LMG 7466 / NCTC 11488 / FDC 602W) (Vibrio succinogenes)).